Reading from the N-terminus, the 295-residue chain is Nucleotide-binding protein LSEI_0959 (295 aa).

12 to 19 (GMSGAGKT) lines the ATP pocket. 62–65 (DLRS) contacts GTP.

This sequence belongs to the RapZ-like family.

In terms of biological role, displays ATPase and GTPase activities. This is Nucleotide-binding protein LSEI_0959 from Lacticaseibacillus paracasei (strain ATCC 334 / BCRC 17002 / CCUG 31169 / CIP 107868 / KCTC 3260 / NRRL B-441) (Lactobacillus paracasei).